A 104-amino-acid chain; its full sequence is MSSVPASAYLTLAIILFCIGLFGALTKRNTVIVLVCIELMLNAANLNLVAFSKLGLFPNLTGQIFSLFTMAVAAAEAAVGLAILIALYRNRTTVHVDEMDTLKG.

The next 3 helical transmembrane spans lie at 4–24 (VPAS…LFGA), 31–51 (VIVL…LVAF), and 67–87 (LFTM…LIAL).

This sequence belongs to the complex I subunit 4L family. As to quaternary structure, NDH-1 is composed of 14 different subunits. Subunits NuoA, H, J, K, L, M, N constitute the membrane sector of the complex.

It localises to the cell membrane. The enzyme catalyses a quinone + NADH + 5 H(+)(in) = a quinol + NAD(+) + 4 H(+)(out). NDH-1 shuttles electrons from NADH, via FMN and iron-sulfur (Fe-S) centers, to quinones in the respiratory chain. The immediate electron acceptor for the enzyme in this species is believed to be a menaquinone. Couples the redox reaction to proton translocation (for every two electrons transferred, four hydrogen ions are translocated across the cytoplasmic membrane), and thus conserves the redox energy in a proton gradient. The polypeptide is NADH-quinone oxidoreductase subunit K (Bacillus cereus (strain AH820)).